A 154-amino-acid chain; its full sequence is Ribonuclease H (154 aa).

In terms of domain architecture, RNase H type-1 spans 3–144 (ELPVVTIYTD…ADQLARDGIV (142 aa)). Residues Asp-12, Glu-50, Asp-72, and Asp-136 each contribute to the Mg(2+) site.

This sequence belongs to the RNase H family. As to quaternary structure, monomer. Mg(2+) serves as cofactor.

It localises to the cytoplasm. The enzyme catalyses Endonucleolytic cleavage to 5'-phosphomonoester.. Functionally, endonuclease that specifically degrades the RNA of RNA-DNA hybrids. In Bradyrhizobium diazoefficiens (strain JCM 10833 / BCRC 13528 / IAM 13628 / NBRC 14792 / USDA 110), this protein is Ribonuclease H.